The sequence spans 667 residues: DNA ligase (667 aa).

NAD(+) contacts are provided by residues 34–38 (DQEYD), 83–84 (SL), and Glu114. Catalysis depends on Lys116, which acts as the N6-AMP-lysine intermediate. Arg137, Glu170, Lys286, and Lys310 together coordinate NAD(+). The Zn(2+) site is built by Cys404, Cys407, Cys422, and Cys427. In terms of domain architecture, BRCT spans 588–667 (HLAQKFENYR…EFQQLLSKED (80 aa)).

Belongs to the NAD-dependent DNA ligase family. LigA subfamily. It depends on Mg(2+) as a cofactor. Mn(2+) is required as a cofactor.

The enzyme catalyses NAD(+) + (deoxyribonucleotide)n-3'-hydroxyl + 5'-phospho-(deoxyribonucleotide)m = (deoxyribonucleotide)n+m + AMP + beta-nicotinamide D-nucleotide.. In terms of biological role, DNA ligase that catalyzes the formation of phosphodiester linkages between 5'-phosphoryl and 3'-hydroxyl groups in double-stranded DNA using NAD as a coenzyme and as the energy source for the reaction. It is essential for DNA replication and repair of damaged DNA. The polypeptide is DNA ligase (Spiroplasma citri).